We begin with the raw amino-acid sequence, 204 residues long: Minor allergen Alt a 7 (204 aa).

The region spanning 5 to 195 (IAIVYYSMYG…NIAQAQGKAF (191 aa)) is the Flavodoxin-like domain.

This sequence belongs to the WrbA family.

The protein resides in the cytoplasm. This chain is Minor allergen Alt a 7 (ALTA7), found in Alternaria alternata (Alternaria rot fungus).